Here is a 156-residue protein sequence, read N- to C-terminus: Transcriptional repressor NrdR (156 aa).

Residues Cys3–Cys34 fold into a zinc finger. The region spanning Leu46 to Asp136 is the ATP-cone domain.

This sequence belongs to the NrdR family. Requires Zn(2+) as cofactor.

In terms of biological role, negatively regulates transcription of bacterial ribonucleotide reductase nrd genes and operons by binding to NrdR-boxes. This Corynebacterium efficiens (strain DSM 44549 / YS-314 / AJ 12310 / JCM 11189 / NBRC 100395) protein is Transcriptional repressor NrdR.